Consider the following 144-residue polypeptide: Large ribosomal subunit protein uL13 (144 aa).

Belongs to the universal ribosomal protein uL13 family. Part of the 50S ribosomal subunit.

This protein is one of the early assembly proteins of the 50S ribosomal subunit, although it is not seen to bind rRNA by itself. It is important during the early stages of 50S assembly. This Chloroflexus aurantiacus (strain ATCC 29366 / DSM 635 / J-10-fl) protein is Large ribosomal subunit protein uL13.